Consider the following 746-residue polypeptide: Protein C-mannosyl-transferase DPY19L1 (746 aa).

Positions 1–68 (MVLQARSKHR…RAETAAPAPD (68 aa)) are disordered. The segment covering 14–27 (PRPPRPARSSPPPL) has biased composition (pro residues). The next 12 helical transmembrane spans lie at 93-113 (STLL…TQLF), 139-159 (YSYF…WMIM), 227-247 (ACFY…LFFI), 248-268 (YGTY…CFFF), 308-328 (YRGS…PWQF), 329-349 (AQFV…VGYI), 357-377 (IIYT…GNSM), 378-398 (LLTS…AMKP), 405-425 (VSEL…TVTL), 481-501 (LLLP…INDM), 520-540 (GELV…ILIM), and 562-582 (LFGW…VLAA).

The protein belongs to the dpy-19 family.

It is found in the endoplasmic reticulum membrane. The catalysed reaction is L-tryptophyl-[protein] + a di-trans,poly-cis-dolichyl beta-D-mannosyl phosphate = C-alpha-D-mannosyl-L-tryptophyl-[protein] + a di-trans,poly-cis-dolichyl phosphate + H(+). Its pathway is protein modification; protein glycosylation. Functionally, C-mannosyltransferase that mediates the C-mannosylation tryptophan residues on target proteins. The reaction occurs on the luminal side of the endoplasmic reticulum and involves the transfer of a mannose unit from a dolichylphosphate mannose (Dol-P-Man) donor to an acceptor protein containing a WxxW consensus sequence. C-mannosylates the first two tryptophans in the WxxWxxWxxC sequence motif in thrombospondin (TSP) type-1 repeats of UNC5A. Regulates neurite extension during development. The protein is Protein C-mannosyl-transferase DPY19L1 (Dpy19l1) of Rattus norvegicus (Rat).